The primary structure comprises 236 residues: MSDLTDAPQANTDTLTTSAPDKLSGFEWWRRSLQYRTGMGISEDEKKQFEHDYRAKSLPKQCTDCVANLDWMLNYSPSVIFMMDHVKKIGGNISKSNIICDVCDDYKGGGFHPEGGILLCSNWITDKWQLEDILTHELVHAYDFLKFKVDLTNLKHHACTEIRASMLSGECRIFNEIKKTGLGDFGKKFQSCIKRRAILSVSANPNCKDTQEAEKVVNTVWQSCFNDTRPFERVYR.

Histidine 136 is an a divalent metal cation binding site. The active site involves glutamate 137. Histidine 140 serves as a coordination point for a divalent metal cation.

Belongs to the peptidase M76 family.

The protein localises to the mitochondrion inner membrane. Its function is as follows. Has a dual role in the assembly of mitochondrial ATPase. Acts as a protease that removes N-terminal residues of mitochondrial ATPase CF(0) subunit 6 at the intermembrane space side. Also involved in the correct assembly of the membrane-embedded ATPase CF(0) particle, probably mediating association of subunit 6 with the subunit 9 ring. This is Mitochondrial inner membrane protease ATP23 (ATP23) from Debaryomyces hansenii (strain ATCC 36239 / CBS 767 / BCRC 21394 / JCM 1990 / NBRC 0083 / IGC 2968) (Yeast).